Reading from the N-terminus, the 425-residue chain is Diacetylchitobiose binding protein DasA (425 aa).

Positions 1–20 are cleaved as a signal peptide; it reads MKRKLIAAIGIAGMMVSIAA. C21 is lipidated: N-palmitoyl cysteine. A lipid anchor (S-diacylglycerol cysteine) is attached at C21.

Belongs to the bacterial solute-binding protein 1 family. In terms of assembly, the complex is composed of two ATP-binding proteins (MsiK), two transmembrane proteins (DasB and DasC) and a solute-binding protein (DasA).

It localises to the cell membrane. Part of the ABC transporter complex DasABC-MsiK involved in N,N'-diacetylchitobiose ((GlcNAc)2) uptake. Binds specifically to (GlcNAc)2. Can also bind to GlcNAc, (GlcNAc)3, (GlcNAc)4 and (GlcNAc)5, but it exhibits the highest affinity for (GlcNAc)2. Involved in the control of morphological differentiation. The polypeptide is Diacetylchitobiose binding protein DasA (Streptomyces coelicolor (strain ATCC BAA-471 / A3(2) / M145)).